Consider the following 155-residue polypeptide: Ribosomal RNA large subunit methyltransferase H (155 aa).

Residues Leu-72, Gly-103, and 122–127 (LSDLTL) contribute to the S-adenosyl-L-methionine site.

This sequence belongs to the RNA methyltransferase RlmH family. In terms of assembly, homodimer.

The protein localises to the cytoplasm. It carries out the reaction pseudouridine(1915) in 23S rRNA + S-adenosyl-L-methionine = N(3)-methylpseudouridine(1915) in 23S rRNA + S-adenosyl-L-homocysteine + H(+). Its function is as follows. Specifically methylates the pseudouridine at position 1915 (m3Psi1915) in 23S rRNA. The polypeptide is Ribosomal RNA large subunit methyltransferase H (Delftia acidovorans (strain DSM 14801 / SPH-1)).